The following is a 381-amino-acid chain: Protein-glutamate methylesterase/protein-glutamine glutaminase 1 (381 aa).

Residues 14 to 132 (RVMLVDDSAV…DLAGGVDFKS (119 aa)) enclose the Response regulatory domain. Asp65 carries the post-translational modification 4-aspartylphosphate. The segment at 143–173 (QARRAGARPARPGGPPATRPVIASTSPRTPV) is disordered. Residues 144–153 (ARRAGARPAR) show a composition bias toward low complexity. The 194-residue stretch at 188–381 (PEPPDIIAIG…PWIMKLAARR (194 aa)) folds into the CheB-type methylesterase domain. Active-site residues include Ser199, His227, and Asp323.

It belongs to the CheB family. In terms of processing, phosphorylated by CheA. Phosphorylation of the N-terminal regulatory domain activates the methylesterase activity.

The protein localises to the cytoplasm. It carries out the reaction [protein]-L-glutamate 5-O-methyl ester + H2O = L-glutamyl-[protein] + methanol + H(+). The enzyme catalyses L-glutaminyl-[protein] + H2O = L-glutamyl-[protein] + NH4(+). Involved in chemotaxis. Part of a chemotaxis signal transduction system that modulates chemotaxis in response to various stimuli. Catalyzes the demethylation of specific methylglutamate residues introduced into the chemoreceptors (methyl-accepting chemotaxis proteins or MCP) by CheR. Also mediates the irreversible deamidation of specific glutamine residues to glutamic acid. The chain is Protein-glutamate methylesterase/protein-glutamine glutaminase 1 from Paramagnetospirillum magneticum (strain ATCC 700264 / AMB-1) (Magnetospirillum magneticum).